We begin with the raw amino-acid sequence, 215 residues long: Probable phosphoglycerate mutase GpmB (215 aa).

Residues 8 to 15 (RHGETLWN), 21 to 22 (QG), R58, R60, 82 to 85 (ELNM), and 151 to 152 (GM) each bind substrate. H9 serves as the catalytic Tele-phosphohistidine intermediate. The Proton donor/acceptor role is filled by E82.

It belongs to the phosphoglycerate mutase family. GpmB subfamily.

It carries out the reaction (2R)-2-phosphoglycerate = (2R)-3-phosphoglycerate. The protein operates within carbohydrate degradation; glycolysis; pyruvate from D-glyceraldehyde 3-phosphate: step 3/5. This is Probable phosphoglycerate mutase GpmB from Erwinia tasmaniensis (strain DSM 17950 / CFBP 7177 / CIP 109463 / NCPPB 4357 / Et1/99).